Reading from the N-terminus, the 482-residue chain is Nucleoside triphosphate pyrophosphatase/Nudix hydrolase fusion protein (482 aa).

The tract at residues 1–299 (MSIPLILASK…DLWNVGRGEL (299 aa)) is maf-like. Residue Asp167 is the Proton acceptor of the active site. A Nudix hydrolase domain is found at 338–475 (GTNGASGILL…TDWPRFAARL (138 aa)).

In the N-terminal section; belongs to the Maf family. Requires a divalent metal cation as cofactor.

The protein resides in the cytoplasm. It carries out the reaction a ribonucleoside 5'-triphosphate + H2O = a ribonucleoside 5'-phosphate + diphosphate + H(+). It catalyses the reaction a 2'-deoxyribonucleoside 5'-triphosphate + H2O = a 2'-deoxyribonucleoside 5'-phosphate + diphosphate + H(+). Nucleoside triphosphate pyrophosphatase. May have a dual role in cell division arrest and in preventing the incorporation of modified nucleotides into cellular nucleic acids. This Bifidobacterium longum (strain NCC 2705) protein is Nucleoside triphosphate pyrophosphatase/Nudix hydrolase fusion protein.